Consider the following 179-residue polypeptide: Lebocin-3 (179 aa).

The N-terminal stretch at 1–16 (MYKFLVFSSVLVLFFA) is a signal peptide. Positions 17–120 (QASCQRFIQP…QPIESHRNTR (104 aa)) are excised as a propeptide. O-linked (GalNAc...) threonine glycosylation occurs at Thr135. The propeptide occupies 153 to 179 (RRHASEDQEELRQYNEHFLIPRDIFQE).

The protein belongs to the lebocin family. In terms of processing, O-glycosylation is important for the antibacterial activity of lebocin. Hemolymph. Produced in fat body.

It is found in the secreted. Functionally, antibacterial peptide. The sequence is that of Lebocin-3 (LEB3) from Bombyx mori (Silk moth).